Consider the following 871-residue polypeptide: Valine--tRNA ligase (871 aa).

The 'HIGH' region motif lies at 47–57 (PNVTGRLHIGH). Positions 534–538 (KMSKS) match the 'KMSKS' region motif. An ATP-binding site is contributed by K537. A coiled-coil region spans residues 805–871 (DLTPILNRLN…IEEELARLTR (67 aa)).

It belongs to the class-I aminoacyl-tRNA synthetase family. ValS type 1 subfamily. As to quaternary structure, monomer.

The protein localises to the cytoplasm. It carries out the reaction tRNA(Val) + L-valine + ATP = L-valyl-tRNA(Val) + AMP + diphosphate. Functionally, catalyzes the attachment of valine to tRNA(Val). As ValRS can inadvertently accommodate and process structurally similar amino acids such as threonine, to avoid such errors, it has a 'posttransfer' editing activity that hydrolyzes mischarged Thr-tRNA(Val) in a tRNA-dependent manner. This Nitratiruptor sp. (strain SB155-2) protein is Valine--tRNA ligase.